The primary structure comprises 188 residues: Elongation factor P (188 aa).

Lysine 34 is subject to N6-(3,6-diaminohexanoyl)-5-hydroxylysine.

The protein belongs to the elongation factor P family. In terms of processing, may be beta-lysylated on the epsilon-amino group of Lys-34 by the combined action of EpmA and EpmB, and then hydroxylated on the C5 position of the same residue by EpmC (if this protein is present). Lysylation is critical for the stimulatory effect of EF-P on peptide-bond formation. The lysylation moiety may extend toward the peptidyltransferase center and stabilize the terminal 3-CCA end of the tRNA. Hydroxylation of the C5 position on Lys-34 may allow additional potential stabilizing hydrogen-bond interactions with the P-tRNA.

The protein resides in the cytoplasm. It functions in the pathway protein biosynthesis; polypeptide chain elongation. Its function is as follows. Involved in peptide bond synthesis. Alleviates ribosome stalling that occurs when 3 or more consecutive Pro residues or the sequence PPG is present in a protein, possibly by augmenting the peptidyl transferase activity of the ribosome. Modification of Lys-34 is required for alleviation. The chain is Elongation factor P from Cronobacter sakazakii (strain ATCC BAA-894) (Enterobacter sakazakii).